A 414-amino-acid polypeptide reads, in one-letter code: TAR DNA-binding protein 43 (414 aa).

RRM domains follow at residues 104 to 200 (SDLI…RCTE) and 191 to 262 (RKVF…NAEP). Basic and acidic residues predominate over residues 261 to 274 (EPKHNSNRQLERGG). Disordered regions lie at residues 261 to 303 (EPKH…GNNQ) and 341 to 373 (ASQQ…GNNS). Gly residues predominate over residues 275-303 (RFGGNPGGFGNQGGFGNSRGGGGGLGNNQ). Residues 342–373 (SQQNQSGPSGNNQPQGNMQREQNQGFSSGNNS) are compositionally biased toward low complexity.

In terms of assembly, homodimer.

The protein localises to the nucleus. It is found in the cytoplasm. Its subcellular location is the stress granule. The protein resides in the mitochondrion. In terms of biological role, probably involved in transcriptional repression. May play a role in the maintenance of the circadian clock periodicity. The chain is TAR DNA-binding protein 43 (TARDBP) from Gallus gallus (Chicken).